We begin with the raw amino-acid sequence, 498 residues long: Glutamate--tRNA ligase (498 aa).

The short motif at 11 to 21 (PSPTGHLHIGN) is the 'HIGH' region element. The short motif at 261-265 (KLSKR) is the 'KMSKS' region element. Residue Lys264 participates in ATP binding.

The protein belongs to the class-I aminoacyl-tRNA synthetase family. Glutamate--tRNA ligase type 1 subfamily. Monomer.

Its subcellular location is the cytoplasm. The enzyme catalyses tRNA(Glu) + L-glutamate + ATP = L-glutamyl-tRNA(Glu) + AMP + diphosphate. In terms of biological role, catalyzes the attachment of glutamate to tRNA(Glu) in a two-step reaction: glutamate is first activated by ATP to form Glu-AMP and then transferred to the acceptor end of tRNA(Glu). This chain is Glutamate--tRNA ligase, found in Oenococcus oeni (strain ATCC BAA-331 / PSU-1).